The chain runs to 99 residues: Aspartyl/glutamyl-tRNA(Asn/Gln) amidotransferase subunit C (99 aa).

The protein belongs to the GatC family. In terms of assembly, heterotrimer of A, B and C subunits.

It catalyses the reaction L-glutamyl-tRNA(Gln) + L-glutamine + ATP + H2O = L-glutaminyl-tRNA(Gln) + L-glutamate + ADP + phosphate + H(+). The enzyme catalyses L-aspartyl-tRNA(Asn) + L-glutamine + ATP + H2O = L-asparaginyl-tRNA(Asn) + L-glutamate + ADP + phosphate + 2 H(+). Its function is as follows. Allows the formation of correctly charged Asn-tRNA(Asn) or Gln-tRNA(Gln) through the transamidation of misacylated Asp-tRNA(Asn) or Glu-tRNA(Gln) in organisms which lack either or both of asparaginyl-tRNA or glutaminyl-tRNA synthetases. The reaction takes place in the presence of glutamine and ATP through an activated phospho-Asp-tRNA(Asn) or phospho-Glu-tRNA(Gln). The polypeptide is Aspartyl/glutamyl-tRNA(Asn/Gln) amidotransferase subunit C (Polaromonas sp. (strain JS666 / ATCC BAA-500)).